The following is a 433-amino-acid chain: MNNSEIININGPLKGEIEVPGDKSMTHRAIMLASLAKGISTIYEPLMGEDCRRTMDIFKLLGVTIEEQDNSIIINSPGYQNFITPHQVLYTGNSGTTTRLLAGLLSGLGIESVLSGDVSIGKRPMDRVMKPLLKMNANISGIDNNYTPLIIKPSTIKGINYQMEVASAQVKSAILLASLFSKEATTLTEFDVSRNHTETLFAHFNIPISIQGKTIQTIPYAIEHIQPRDFHVPGDISSAAFFIVAALITPGSDITIHNVGINPTRSGIIDIVKQMGGNIELSNVSKGAEPTASIHVKYTPNLNAVTIKGDLVPRAIDELPVIALLCTQASNSCIIKNAEELKVKETNRIDTTADMLNLLGFNLQPTHDGLIIHPSEFRSNATVDSQTDHRIGMMLAVASLLSSEPLKIEQFDAVNVSFPGFLPKLKLLENEGK.

3-phosphoshikimate is bound by residues lysine 23, serine 24, and arginine 28. Lysine 23 is a binding site for phosphoenolpyruvate. Glycine 95 and arginine 123 together coordinate phosphoenolpyruvate. Positions 167, 169, 317, and 344 each coordinate 3-phosphoshikimate. Residue glutamine 169 participates in phosphoenolpyruvate binding. The active-site Proton acceptor is the aspartate 317. 2 residues coordinate phosphoenolpyruvate: arginine 348 and arginine 390.

This sequence belongs to the EPSP synthase family. As to quaternary structure, monomer.

It localises to the cytoplasm. It carries out the reaction 3-phosphoshikimate + phosphoenolpyruvate = 5-O-(1-carboxyvinyl)-3-phosphoshikimate + phosphate. It functions in the pathway metabolic intermediate biosynthesis; chorismate biosynthesis; chorismate from D-erythrose 4-phosphate and phosphoenolpyruvate: step 6/7. Its function is as follows. Catalyzes the transfer of the enolpyruvyl moiety of phosphoenolpyruvate (PEP) to the 5-hydroxyl of shikimate-3-phosphate (S3P) to produce enolpyruvyl shikimate-3-phosphate and inorganic phosphate. The sequence is that of 3-phosphoshikimate 1-carboxyvinyltransferase from Staphylococcus epidermidis (strain ATCC 12228 / FDA PCI 1200).